We begin with the raw amino-acid sequence, 196 residues long: GTP cyclohydrolase 1 (196 aa).

Zn(2+)-binding residues include cysteine 84, histidine 87, and cysteine 157.

Belongs to the GTP cyclohydrolase I family. Toroid-shaped homodecamer, composed of two pentamers of five dimers.

It catalyses the reaction GTP + H2O = 7,8-dihydroneopterin 3'-triphosphate + formate + H(+). The protein operates within cofactor biosynthesis; 7,8-dihydroneopterin triphosphate biosynthesis; 7,8-dihydroneopterin triphosphate from GTP: step 1/1. This is GTP cyclohydrolase 1 from Corynebacterium glutamicum (strain R).